The following is a 98-amino-acid chain: C-X-C motif chemokine 10 (98 aa).

The N-terminal stretch at 1-21 (MNPSAAVVLCLVLLSLSGTQG) is a signal peptide. Arginine 26 is modified (citrulline). Intrachain disulfides connect cysteine 30–cysteine 57 and cysteine 32–cysteine 74.

The protein belongs to the intercrine alpha (chemokine CxC) family. In terms of assembly, monomer, dimer, and tetramer. Interacts with CXCR3 (via N-terminus). In the central nervous system, CXCL10 is predominantly localized to activated neurons. Expressed in both microglia and astrocytes.

The protein resides in the secreted. In terms of biological role, pro-inflammatory cytokine that is involved in a wide variety of processes such as chemotaxis, differentiation, and activation of peripheral immune cells, regulation of cell growth, apoptosis and modulation of angiostatic effects. Plays thereby an important role during viral infections by stimulating the activation and migration of immune cells to the infected sites. Mechanistically, binding of CXCL10 to the CXCR3 receptor activates G protein-mediated signaling and results in downstream activation of phospholipase C-dependent pathway, an increase in intracellular calcium production and actin reorganization. In turn, recruitment of activated Th1 lymphocytes occurs at sites of inflammation. Activation of the CXCL10/CXCR3 axis also plays an important role in neurons in response to brain injury for activating microglia, the resident macrophage population of the central nervous system, and directing them to the lesion site. This recruitment is an essential element for neuronal reorganization. The polypeptide is C-X-C motif chemokine 10 (Cxcl10) (Rattus norvegicus (Rat)).